The sequence spans 298 residues: MLKIGSHVSMSGKKMLLAASEEAVSYGATTFMIYTGAPQNTRRKPIEELNIEAGRKHMEQNGIEEIIVHAPYIINVGNTTKPETFQLGVDFLRMEIERTSALGVAKQIVLHPGAHVGAGADAGIQQIIKGLNEVLTPDQTVNIALETMAGKGTECGRSFEEIAKIIDGVTYNEKLSVCFDTCHTHDAGYDIVNDFDGVLNEFDKIVGIDRLQVLHINDSKNVRGAGKDRHENIGFGHIGYKALHHIVHHPQLMHVPKILETPYVGEDKKDKKPPYKLEIEMLKNGTFDEGLLEKIKAQ.

Zn(2+)-binding residues include histidine 69, histidine 111, glutamate 146, aspartate 180, histidine 183, histidine 215, aspartate 228, histidine 230, and glutamate 260.

This sequence belongs to the AP endonuclease 2 family. Zn(2+) serves as cofactor.

The catalysed reaction is Endonucleolytic cleavage to 5'-phosphooligonucleotide end-products.. Its function is as follows. Endonuclease IV plays a role in DNA repair. It cleaves phosphodiester bonds at apurinic or apyrimidinic (AP) sites, generating a 3'-hydroxyl group and a 5'-terminal sugar phosphate. The polypeptide is Probable endonuclease 4 (Bacillus cereus (strain AH187)).